The primary structure comprises 505 residues: Cytochrome P450 9b1 (505 aa).

Cys449 contributes to the heme binding site.

Belongs to the cytochrome P450 family. Heme is required as a cofactor.

It is found in the endoplasmic reticulum membrane. It localises to the microsome membrane. In terms of biological role, may be involved in the metabolism of insect hormones and in the breakdown of synthetic insecticides. The protein is Cytochrome P450 9b1 (Cyp9b1) of Drosophila melanogaster (Fruit fly).